A 371-amino-acid polypeptide reads, in one-letter code: 4-hydroxyphenylpyruvate dioxygenase-like protein (371 aa).

VOC domains are found at residues 7 to 135 and 160 to 328; these read RLCH…LLQR and HVDH…VFTK. 3 residues coordinate Fe cation: His163, His258, and Glu339.

It belongs to the 4HPPD family. The cofactor is Fe cation.

The protein localises to the mitochondrion. It carries out the reaction 3-(4-hydroxyphenyl)pyruvate + O2 = (S)-4-hydroxymandelate + CO2. In terms of biological role, iron-dependent dioxygenase that catalyzes the conversion of 4-hydroxyphenylpyruvate (4-HPPA) to 4-hydroxymandelate (4-HMA) in the mitochondria, one of the steps in the biosynthesis of coenzyme Q10 from tyrosine. The chain is 4-hydroxyphenylpyruvate dioxygenase-like protein from Rattus norvegicus (Rat).